The chain runs to 466 residues: Cysteine--tRNA ligase (466 aa).

Cys-28 serves as a coordination point for Zn(2+). The 'HIGH' region signature appears at 30–40 (PTVYNFFHIGN). Residues Cys-208, His-233, and Glu-237 each contribute to the Zn(2+) site. A 'KMSKS' region motif is present at residues 265 to 269 (KMSKS). Lys-268 is an ATP binding site.

This sequence belongs to the class-I aminoacyl-tRNA synthetase family. Monomer. It depends on Zn(2+) as a cofactor.

Its subcellular location is the cytoplasm. It catalyses the reaction tRNA(Cys) + L-cysteine + ATP = L-cysteinyl-tRNA(Cys) + AMP + diphosphate. This Clostridium perfringens (strain 13 / Type A) protein is Cysteine--tRNA ligase.